The primary structure comprises 664 residues: Methionine--tRNA ligase (664 aa).

Residues 15 to 25 (YYPSGKLHIGH) carry the 'HIGH' region motif. The 'KMSKS' region motif lies at 311–315 (KMSKS). Lys-314 contributes to the ATP binding site. Positions 536 to 556 (MQGSAPAKEETKEEEPQEVDR) are disordered. In terms of domain architecture, tRNA-binding spans 570–662 (LRVAEVIEAE…IDQSLPKGTR (93 aa)).

The protein belongs to the class-I aminoacyl-tRNA synthetase family. MetG type 2B subfamily. In terms of assembly, homodimer.

It is found in the cytoplasm. It catalyses the reaction tRNA(Met) + L-methionine + ATP = L-methionyl-tRNA(Met) + AMP + diphosphate. Its function is as follows. Is required not only for elongation of protein synthesis but also for the initiation of all mRNA translation through initiator tRNA(fMet) aminoacylation. In Bacillus subtilis (strain 168), this protein is Methionine--tRNA ligase (metG).